The chain runs to 324 residues: Glyoxylate/hydroxypyruvate reductase B (324 aa).

Catalysis depends on residues Arg-237 and Glu-266. His-285 acts as the Proton donor in catalysis.

Belongs to the D-isomer specific 2-hydroxyacid dehydrogenase family. GhrB subfamily. Homodimer.

It is found in the cytoplasm. It catalyses the reaction glycolate + NADP(+) = glyoxylate + NADPH + H(+). The enzyme catalyses (R)-glycerate + NAD(+) = 3-hydroxypyruvate + NADH + H(+). It carries out the reaction (R)-glycerate + NADP(+) = 3-hydroxypyruvate + NADPH + H(+). Its function is as follows. Catalyzes the NADPH-dependent reduction of glyoxylate and hydroxypyruvate into glycolate and glycerate, respectively. The protein is Glyoxylate/hydroxypyruvate reductase B of Salmonella choleraesuis (strain SC-B67).